The sequence spans 358 residues: Peptide chain release factor 1 (358 aa).

N5-methylglutamine is present on Q236.

The protein belongs to the prokaryotic/mitochondrial release factor family. Post-translationally, methylated by PrmC. Methylation increases the termination efficiency of RF1.

It localises to the cytoplasm. Peptide chain release factor 1 directs the termination of translation in response to the peptide chain termination codons UAG and UAA. In Corynebacterium efficiens (strain DSM 44549 / YS-314 / AJ 12310 / JCM 11189 / NBRC 100395), this protein is Peptide chain release factor 1.